A 221-amino-acid chain; its full sequence is Potassium voltage-gated channel subfamily E member 4 (221 aa).

Over methionine 1–glutamate 86 the chain is Extracellular. N-linked (GlcNAc...) asparagine glycosylation occurs at asparagine 9. Over residues leucine 58–leucine 72 the composition is skewed to polar residues. The interval leucine 58–alanine 77 is disordered. The helical transmembrane segment at tyrosine 87–glycine 107 threads the bilayer. The Cytoplasmic portion of the chain corresponds to tyrosine 108–serine 221. The segment at serine 175–serine 221 is disordered. Residues glutamate 192–serine 202 are compositionally biased toward acidic residues. The span at glutamate 203 to serine 221 shows a compositional bias: polar residues.

Belongs to the potassium channel KCNE family. As to quaternary structure, forms heterooligomers with KCNA3, inhibiting its activity by impairing localization to the cell membrane. The stoichiometry of KCNA3 and KCNE4 in the heterooligomers are 4:1, 4:2, 4:3 or 4:4 respectively. Increasing the number of KCNE4 subunits steadily slows the activation KCNA3 and decreases its abundance at the cell membrane. However, a single subunit of KCNE4 is sufficient for the cooperative enhancement of the inactivating function of the channel. However, a single subunit of KCNE4 is sufficient for the cooperative enhancement of the inactivating function of the channel. Interacts with KCNQ1; impairs KCNQ1 localization in lipid rafts and inhibits voltage-gated potassium channel activity. In terms of tissue distribution, predominantly expressed in embryo and adult uterus. Low expression found in kidney, small intestine, lung and heart. Detected in kidney, thymus, and uterus (at protein level).

The protein resides in the membrane. Ancillary protein that functions as a regulatory subunit of the voltage-gated potassium (Kv) channel complex composed of pore-forming and potassium-conducting alpha subunits and of regulatory beta subunits. KCNE4 beta subunit modulates the gating kinetics and enhances stability of the channel complex. Associates with KCNQ1/KVLTQ1 alpha subunit to inhibit potassium currents. Its function is as follows. May inhibit KCNQ4-mediated potassium currents. The protein is Potassium voltage-gated channel subfamily E member 4 of Homo sapiens (Human).